A 288-amino-acid polypeptide reads, in one-letter code: Fructose-bisphosphate aldolase (288 aa).

Serine 49 is a D-glyceraldehyde 3-phosphate binding site. The Proton donor role is filled by aspartate 84. Residues histidine 85, aspartate 105, glutamate 135, and histidine 177 each coordinate Zn(2+). Residue glycine 178 participates in dihydroxyacetone phosphate binding. Histidine 206 lines the Zn(2+) pocket. Dihydroxyacetone phosphate-binding positions include 207 to 209 and 228 to 231; these read GGS and NINT.

The protein belongs to the class II fructose-bisphosphate aldolase family. Homodimer. Requires Zn(2+) as cofactor.

It catalyses the reaction beta-D-fructose 1,6-bisphosphate = D-glyceraldehyde 3-phosphate + dihydroxyacetone phosphate. It participates in carbohydrate degradation; glycolysis; D-glyceraldehyde 3-phosphate and glycerone phosphate from D-glucose: step 4/4. Its function is as follows. Catalyzes the aldol condensation of dihydroxyacetone phosphate (DHAP or glycerone-phosphate) with glyceraldehyde 3-phosphate (G3P) to form fructose 1,6-bisphosphate (FBP) in gluconeogenesis and the reverse reaction in glycolysis. This is Fructose-bisphosphate aldolase (fba) from Mycoplasma pneumoniae (strain ATCC 29342 / M129 / Subtype 1) (Mycoplasmoides pneumoniae).